An 835-amino-acid chain; its full sequence is Lon protease (835 aa).

One can recognise a Lon N-terminal domain in the interval 36 to 234; sequence VHVFPLLRRP…KALILLKKEL (199 aa). 387–394 provides a ligand contact to ATP; it reads GPPGVGKT. Positions 646 to 828 constitute a Lon proteolytic domain; it reads RTPVGVCMGL…DQVFKISFPN (183 aa). Residues serine 734 and lysine 777 contribute to the active site.

Belongs to the peptidase S16 family. Homohexamer. Organized in a ring with a central cavity.

Its subcellular location is the cytoplasm. It carries out the reaction Hydrolysis of proteins in presence of ATP.. In terms of biological role, ATP-dependent serine protease that mediates the selective degradation of mutant and abnormal proteins as well as certain short-lived regulatory proteins. Required for cellular homeostasis and for survival from DNA damage and developmental changes induced by stress. Degrades polypeptides processively to yield small peptide fragments that are 5 to 10 amino acids long. Binds to DNA in a double-stranded, site-specific manner. The protein is Lon protease of Protochlamydia amoebophila (strain UWE25).